The chain runs to 350 residues: Galactokinase (350 aa).

14 to 17 serves as a coordination point for substrate; it reads EHTD. Residues S46 and 96–102 contribute to the ATP site; that span reads GAGLSSS. Positions 102 and 134 each coordinate Mg(2+). D146 functions as the Proton acceptor in the catalytic mechanism. Y196 is a binding site for substrate.

The protein belongs to the GHMP kinase family. GalK subfamily.

The protein localises to the cytoplasm. It carries out the reaction alpha-D-galactose + ATP = alpha-D-galactose 1-phosphate + ADP + H(+). Its pathway is carbohydrate metabolism; galactose metabolism. In terms of biological role, catalyzes the transfer of the gamma-phosphate of ATP to D-galactose to form alpha-D-galactose-1-phosphate (Gal-1-P). The sequence is that of Galactokinase from Thermotoga petrophila (strain ATCC BAA-488 / DSM 13995 / JCM 10881 / RKU-1).